The chain runs to 719 residues: Eukaryotic translation initiation factor 3 subunit B (719 aa).

The RRM domain occupies asparagine 60–aspartate 147. 3 WD repeats span residues valine 167–leucine 207, leucine 511–serine 553, and glutamate 555–isoleucine 598. The span at glutamate 675 to glutamate 686 shows a compositional bias: basic and acidic residues. Residues glutamate 675–glutamate 698 are disordered. The span at alanine 687 to glutamate 698 shows a compositional bias: acidic residues.

It belongs to the eIF-3 subunit B family. As to quaternary structure, component of the eukaryotic translation initiation factor 3 (eIF-3) complex.

It localises to the cytoplasm. In terms of biological role, RNA-binding component of the eukaryotic translation initiation factor 3 (eIF-3) complex, which is involved in protein synthesis of a specialized repertoire of mRNAs and, together with other initiation factors, stimulates binding of mRNA and methionyl-tRNAi to the 40S ribosome. The eIF-3 complex specifically targets and initiates translation of a subset of mRNAs involved in cell proliferation. This chain is Eukaryotic translation initiation factor 3 subunit B (TIF3B1), found in Nicotiana tabacum (Common tobacco).